The primary structure comprises 762 residues: Endonuclease MutS2 (762 aa).

The tract at residues 1–22 (MSDAPKRSLNPTLMMNNNNTPP) is disordered. Over residues 9-20 (LNPTLMMNNNNT) the composition is skewed to low complexity. 333 to 340 (GVNAGGKT) serves as a coordination point for ATP. Positions 688–762 (LDLRGQRSEE…GGSGVKIVKL (75 aa)) constitute a Smr domain.

Belongs to the DNA mismatch repair MutS family. MutS2 subfamily. As to quaternary structure, homodimer. Binds to stalled ribosomes, contacting rRNA.

ATPase activity is stimulated by DNA. Its function is as follows. Endonuclease that is involved in the suppression of homologous recombination and may thus have a key role in the control of bacterial genetic diversity. Also involved in repairing oxidative DNA damage. Has ATPase activity. Binds DNA. Functionally, endonuclease that is involved in the suppression of homologous recombination and thus may have a key role in the control of bacterial genetic diversity. Acts as a ribosome collision sensor, splitting the ribosome into its 2 subunits. Detects stalled/collided 70S ribosomes which it binds and splits by an ATP-hydrolysis driven conformational change. Acts upstream of the ribosome quality control system (RQC), a ribosome-associated complex that mediates the extraction of incompletely synthesized nascent chains from stalled ribosomes and their subsequent degradation. Probably generates substrates for RQC. The chain is Endonuclease MutS2 from Helicobacter pylori (strain ATCC 700392 / 26695) (Campylobacter pylori).